The primary structure comprises 340 residues: Tetraacyldisaccharide 4'-kinase (340 aa).

Position 47 to 54 (47 to 54) interacts with ATP; sequence SVGGTGKT.

Belongs to the LpxK family.

It catalyses the reaction a lipid A disaccharide + ATP = a lipid IVA + ADP + H(+). Its pathway is glycolipid biosynthesis; lipid IV(A) biosynthesis; lipid IV(A) from (3R)-3-hydroxytetradecanoyl-[acyl-carrier-protein] and UDP-N-acetyl-alpha-D-glucosamine: step 6/6. In terms of biological role, transfers the gamma-phosphate of ATP to the 4'-position of a tetraacyldisaccharide 1-phosphate intermediate (termed DS-1-P) to form tetraacyldisaccharide 1,4'-bis-phosphate (lipid IVA). The polypeptide is Tetraacyldisaccharide 4'-kinase (Flavobacterium johnsoniae (strain ATCC 17061 / DSM 2064 / JCM 8514 / BCRC 14874 / CCUG 350202 / NBRC 14942 / NCIMB 11054 / UW101) (Cytophaga johnsonae)).